A 191-amino-acid polypeptide reads, in one-letter code: Methylated-DNA--protein-cysteine methyltransferase (191 aa).

DNA-binding residues include Y120 and R134. The Nucleophile; methyl group acceptor role is filled by C151.

This sequence belongs to the MGMT family.

The protein resides in the nucleus. It carries out the reaction a 6-O-methyl-2'-deoxyguanosine in DNA + L-cysteinyl-[protein] = S-methyl-L-cysteinyl-[protein] + a 2'-deoxyguanosine in DNA. It catalyses the reaction a 4-O-methyl-thymidine in DNA + L-cysteinyl-[protein] = a thymidine in DNA + S-methyl-L-cysteinyl-[protein]. In terms of biological role, involved in the cellular defense against the biological effects of O6-methylguanine (O6-MeG) and O4-methylthymine (O4-MeT) in DNA. Repairs the methylated nucleobase in DNA by stoichiometrically transferring the methyl group to a cysteine residue in the enzyme. This is a suicide reaction: the enzyme is irreversibly inactivated. The polypeptide is Methylated-DNA--protein-cysteine methyltransferase (MGT1) (Debaryomyces hansenii (strain ATCC 36239 / CBS 767 / BCRC 21394 / JCM 1990 / NBRC 0083 / IGC 2968) (Yeast)).